We begin with the raw amino-acid sequence, 565 residues long: Probable protease Gilli_2517 (565 aa).

Functionally, probably a dedicated protease for substrate gasdermin bGSDM; cleaves the bGSDM precursor, releasing the pore-forming moiety, which integrates into the membrane and triggers cell death. Involved in defense against bacteriophages. Expression of bGSDM and this neighboring protease is not toxic in E.coli. In Gillisia limnaea (strain DSM 15749 / LMG 21470 / R-8282), this protein is Probable protease Gilli_2517.